The chain runs to 152 residues: Transcriptional regulator MraZ (152 aa).

SpoVT-AbrB domains lie at 5-52 (ASAI…PLQE) and 81-124 (AHEC…DEAA).

This sequence belongs to the MraZ family. In terms of assembly, forms oligomers.

Its subcellular location is the cytoplasm. The protein localises to the nucleoid. The polypeptide is Transcriptional regulator MraZ (Shewanella denitrificans (strain OS217 / ATCC BAA-1090 / DSM 15013)).